A 108-amino-acid polypeptide reads, in one-letter code: Large ribosomal subunit protein uL24 (108 aa).

Belongs to the universal ribosomal protein uL24 family. Part of the 50S ribosomal subunit.

Functionally, one of two assembly initiator proteins, it binds directly to the 5'-end of the 23S rRNA, where it nucleates assembly of the 50S subunit. Its function is as follows. One of the proteins that surrounds the polypeptide exit tunnel on the outside of the subunit. This is Large ribosomal subunit protein uL24 from Trichlorobacter lovleyi (strain ATCC BAA-1151 / DSM 17278 / SZ) (Geobacter lovleyi).